Reading from the N-terminus, the 903-residue chain is MVPRLTVILFLTLHLLPGMKSSMVNLINNGYDGIVIAINPSVPEDEKLIQNIKEMVTEASTYLFHATKRRVYFRNVSILIPMTWKSKSEYLMPKQESYDQAEVIVANPYLKHGDDPYTLQYGRCGEKGQYIHFTPNFLLTNNLPIYGSRGRAFVHEWAHLRWGIFDEYNGDQPFYISRRNTIEATRCSTHITGTNVIVKCQGGSCITRPCRRDSQTGLYEAKCTFIPEKSQTARESIMFMQSLHSVTEFCTEKTHNVEAPNLQNKMCNGKSTWDVIMNSTDFQNTSPMTEMNPPTQPTFSLLKSKQRVVCLVLDKSGSMSSEDRLFRMNQAAELFLIQIIEKGSLVGMVTFDSVAEIRNNLTKITDDNVYENITANLPQEANGGTSICRGLKAGFQAIIQSQQSTSGSEIILLTDGEDNEIHSCIEEVKQSGVIIHTIALGPSAAKELETLSDMTGGHRFYANKDINGLTNAFSRISSRSGSITQQTIQLESKALAITEKKWVNGTVPVDSTIGNDTFFVVTWTIKKPEILLQDPKGKKYKTSDFKEDKLNIHSARLRIPGIAETGTWTYSLLNNHASPQILTVTVTTRARSPTTPPVTATAHMSQNTAHYPSPVIVYAQVSQGFLPVLGINVTAIIETEDGHQVTLELWDNGAGADTVKNDGIYSRYFTDYRGNGRYSLKVHAEARNNTARLSLRQPQNKALYIPGYIENGKIILNPPRPEVKDDLAKAEIEDFSRLTSGGSFTVSGAPPGNHPSVLPPNKIIDLEAKFKEDHIQLSWTAPANVLDKGKANSYIIRISKSFLDLQKDFDNATLVNTSSLKPKEAGSDENFEFKPEPFRIENGTNFYIAVQAINEANLTSEVSNIAQAIKFIPMPEDSVPALGTKISAINLAIFALAMILSIV.

An N-terminal signal peptide occupies residues 1-21 (MVPRLTVILFLTLHLLPGMKS). The segment at 45-199 (DEKLIQNIKE…HITGTNVIVK (155 aa)) is metalloprotease domain. Histidine 155 provides a ligand contact to Zn(2+). Residue glutamate 156 is part of the active site. Positions 159 and 166 each coordinate Zn(2+). The 169-residue stretch at 308-476 (VVCLVLDKSG…NGLTNAFSRI (169 aa)) folds into the VWFA domain. 4 N-linked (GlcNAc...) asparagine glycosylation sites follow: asparagine 360, asparagine 372, asparagine 504, and asparagine 842. A helical transmembrane segment spans residues 883–903 (GTKISAINLAIFALAMILSIV).

Belongs to the CLCR family. Post-translationally, glycosylated. The 125-kDa product is autoproteolytically processed by the metalloprotease domain and yields to two cell-surface-associated subunits, a 90-kDa protein and a group of 37- to 41-kDa proteins. The cleavage is necessary for calcium-activated chloride channel (CaCC) activation activity. As to expression, trachea.

It localises to the apical cell membrane. Functionally, may be involved in mediating calcium-activated chloride conductance. May play critical roles in goblet cell metaplasia, mucus hypersecretion, cystic fibrosis and AHR. May be involved in the regulation of mucus production and/or secretion by goblet cells. Involved in the regulation of tissue inflammation in the innate immune response. May play a role as a tumor suppressor. Induces MUC5AC. In Bos taurus (Bovine), this protein is Calcium-activated chloride channel regulator 1.